A 625-amino-acid polypeptide reads, in one-letter code: Acetolactate synthase (625 aa).

A disordered region spans residues 1 to 29 (MSAPTKPHARPQGAGNSVPNTVKPATQFP). Polar residues predominate over residues 14–29 (AGNSVPNTVKPATQFP). Glu92 is a thiamine diphosphate binding site. FAD contacts are provided by residues Arg194, 300-321 (HGTV…LGTR), and 343-362 (DIDP…IVGD). The segment at 436-516 (QHQMWAAQFI…IKVALINNGN (81 aa)) is thiamine pyrophosphate binding. Positions 487 and 514 each coordinate Mg(2+).

This sequence belongs to the TPP enzyme family. Mg(2+) serves as cofactor. Thiamine diphosphate is required as a cofactor.

It catalyses the reaction 2 pyruvate + H(+) = (2S)-2-acetolactate + CO2. It functions in the pathway amino-acid biosynthesis; L-isoleucine biosynthesis; L-isoleucine from 2-oxobutanoate: step 1/4. The protein operates within amino-acid biosynthesis; L-valine biosynthesis; L-valine from pyruvate: step 1/4. The polypeptide is Acetolactate synthase (ilvB) (Mycobacterium leprae (strain TN)).